A 173-amino-acid polypeptide reads, in one-letter code: Shikimate kinase 2 (173 aa).

Residue 12–17 (GCGKTT) participates in ATP binding. Residues threonine 16 and aspartate 32 each coordinate Mg(2+). Aspartate 34, arginine 58, and glycine 79 together coordinate substrate. An LID domain region spans residues 112–126 (EENPQDNQRPTLTGR). Position 120 (arginine 120) interacts with ATP. Arginine 139 contributes to the substrate binding site. Residue glutamine 155 participates in ATP binding.

It belongs to the shikimate kinase family. AroL subfamily. As to quaternary structure, monomer. The cofactor is Mg(2+).

Its subcellular location is the cytoplasm. It catalyses the reaction shikimate + ATP = 3-phosphoshikimate + ADP + H(+). It participates in metabolic intermediate biosynthesis; chorismate biosynthesis; chorismate from D-erythrose 4-phosphate and phosphoenolpyruvate: step 5/7. In terms of biological role, catalyzes the specific phosphorylation of the 3-hydroxyl group of shikimic acid using ATP as a cosubstrate. In Pectobacterium carotovorum subsp. carotovorum (strain PC1), this protein is Shikimate kinase 2.